A 561-amino-acid polypeptide reads, in one-letter code: DNA ligase B (561 aa).

The active-site N6-AMP-lysine intermediate is the lysine 124.

This sequence belongs to the NAD-dependent DNA ligase family. LigB subfamily.

It catalyses the reaction NAD(+) + (deoxyribonucleotide)n-3'-hydroxyl + 5'-phospho-(deoxyribonucleotide)m = (deoxyribonucleotide)n+m + AMP + beta-nicotinamide D-nucleotide.. In terms of biological role, catalyzes the formation of phosphodiester linkages between 5'-phosphoryl and 3'-hydroxyl groups in double-stranded DNA using NAD as a coenzyme and as the energy source for the reaction. The polypeptide is DNA ligase B (Cronobacter sakazakii (strain ATCC BAA-894) (Enterobacter sakazakii)).